The following is a 401-amino-acid chain: Nicotinate phosphoribosyltransferase (401 aa).

Histidine 224 is subject to Phosphohistidine; by autocatalysis.

It belongs to the NAPRTase family. Post-translationally, transiently phosphorylated on a His residue during the reaction cycle. Phosphorylation strongly increases the affinity for substrates and increases the rate of nicotinate D-ribonucleotide production. Dephosphorylation regenerates the low-affinity form of the enzyme, leading to product release.

The catalysed reaction is nicotinate + 5-phospho-alpha-D-ribose 1-diphosphate + ATP + H2O = nicotinate beta-D-ribonucleotide + ADP + phosphate + diphosphate. The protein operates within cofactor biosynthesis; NAD(+) biosynthesis; nicotinate D-ribonucleotide from nicotinate: step 1/1. Its function is as follows. Catalyzes the synthesis of beta-nicotinate D-ribonucleotide from nicotinate and 5-phospho-D-ribose 1-phosphate at the expense of ATP. This Pseudomonas putida (strain ATCC 700007 / DSM 6899 / JCM 31910 / BCRC 17059 / LMG 24140 / F1) protein is Nicotinate phosphoribosyltransferase.